The chain runs to 69 residues: Large ribosomal subunit protein uL29 (69 aa).

It belongs to the universal ribosomal protein uL29 family.

The polypeptide is Large ribosomal subunit protein uL29 (Staphylococcus saprophyticus subsp. saprophyticus (strain ATCC 15305 / DSM 20229 / NCIMB 8711 / NCTC 7292 / S-41)).